The sequence spans 249 residues: 5-oxoprolinase subunit A (249 aa).

Belongs to the LamB/PxpA family. In terms of assembly, forms a complex composed of PxpA, PxpB and PxpC.

It carries out the reaction 5-oxo-L-proline + ATP + 2 H2O = L-glutamate + ADP + phosphate + H(+). Functionally, catalyzes the cleavage of 5-oxoproline to form L-glutamate coupled to the hydrolysis of ATP to ADP and inorganic phosphate. This Limosilactobacillus fermentum (strain NBRC 3956 / LMG 18251) (Lactobacillus fermentum) protein is 5-oxoprolinase subunit A.